A 287-amino-acid polypeptide reads, in one-letter code: 2-dehydro-3-deoxyphosphooctonate aldolase (287 aa).

It belongs to the KdsA family.

The protein resides in the cytoplasm. It carries out the reaction D-arabinose 5-phosphate + phosphoenolpyruvate + H2O = 3-deoxy-alpha-D-manno-2-octulosonate-8-phosphate + phosphate. It functions in the pathway carbohydrate biosynthesis; 3-deoxy-D-manno-octulosonate biosynthesis; 3-deoxy-D-manno-octulosonate from D-ribulose 5-phosphate: step 2/3. The protein operates within bacterial outer membrane biogenesis; lipopolysaccharide biosynthesis. The sequence is that of 2-dehydro-3-deoxyphosphooctonate aldolase from Rhodopseudomonas palustris (strain ATCC BAA-98 / CGA009).